A 497-amino-acid polypeptide reads, in one-letter code: Membrane-bound lytic murein transglycosylase F (497 aa).

Residues 1–29 (MFFRPDFRPRCAKWLIATGLFLMLGACVE) form the signal peptide. The non-LT domain stretch occupies residues 30 to 267 (KPTTLERVKE…RLKDRYYGHV (238 aa)). An LT domain region spans residues 268 to 497 (DVLGYVGAYT…PASSPEKPAL (230 aa)). The active site involves Glu314. A disordered region spans residues 464–497 (VADGNLHVPGVDKTQPPAPTAPVVPASSPEKPAL). The span at 486 to 497 (VVPASSPEKPAL) shows a compositional bias: low complexity.

This sequence in the N-terminal section; belongs to the bacterial solute-binding protein 3 family. In the C-terminal section; belongs to the transglycosylase Slt family.

It localises to the cell outer membrane. The enzyme catalyses Exolytic cleavage of the (1-&gt;4)-beta-glycosidic linkage between N-acetylmuramic acid (MurNAc) and N-acetylglucosamine (GlcNAc) residues in peptidoglycan, from either the reducing or the non-reducing ends of the peptidoglycan chains, with concomitant formation of a 1,6-anhydrobond in the MurNAc residue.. Murein-degrading enzyme that degrades murein glycan strands and insoluble, high-molecular weight murein sacculi, with the concomitant formation of a 1,6-anhydromuramoyl product. Lytic transglycosylases (LTs) play an integral role in the metabolism of the peptidoglycan (PG) sacculus. Their lytic action creates space within the PG sacculus to allow for its expansion as well as for the insertion of various structures such as secretion systems and flagella. In Pseudomonas syringae pv. tomato (strain ATCC BAA-871 / DC3000), this protein is Membrane-bound lytic murein transglycosylase F.